A 1728-amino-acid polypeptide reads, in one-letter code: Hybrid PKS-NRPS synthetase TAS1 (1728 aa).

The tract at residues 153 to 499 (SPLSKAQMAL…MDPTLLDFKV (347 aa)) is condensation (C) domain. The tract at residues 608–1002 (KARAASQPDL…KLHIQGRIGN (395 aa)) is adenylation (A) domain. Residues 1141-1219 (MLRRHLTAEV…KQVDCLMGIV (79 aa)) form the Carrier domain. Serine 1177 bears the O-(pantetheine 4'-phosphoryl)serine mark. A disordered region spans residues 1225–1256 (LGSEPTGGSSSRSQSRRSAETSSSSTSAPSSV). Low complexity-rich tracts occupy residues 1226 to 1237 (GSEPTGGSSSRS) and 1244 to 1255 (ETSSSSTSAPSS). One can recognise a Ketosynthase family 3 (KS3) domain in the interval 1262-1714 (RNLYAIVGIS…SDATWFVIST (453 aa)). Residues cysteine 1436, histidine 1579, and asparagine 1633 each act as for beta-ketoacyl synthase activity in the active site.

This sequence in the N-terminal section; belongs to the NRP synthetase family. Requires pantetheine 4'-phosphate as cofactor.

The catalysed reaction is acetoacetyl-CoA + L-isoleucine + ATP = tenuazonic acid + AMP + diphosphate + CoA + 2 H(+). In terms of biological role, hybrid PKS-NRPS synthetase that mediates the biosynthesis of the toxin tenuazonic acid (TeA), an inhibitor of protein biosynthesis on ribosomes by suppressing the release of new protein. TAS1 alone is sufficient for TeA synthesis via the condensation of isoleucine (Ile) with acetoacetyl-CoA by the N-terminal NRPS module and subsequent cyclization conducted by the C-terminal KS domain. The protein is Hybrid PKS-NRPS synthetase TAS1 of Pyricularia oryzae (strain 70-15 / ATCC MYA-4617 / FGSC 8958) (Rice blast fungus).